The sequence spans 500 residues: Lysine--tRNA ligase (500 aa).

Residues glutamate 402 and glutamate 409 each coordinate Mg(2+).

It belongs to the class-II aminoacyl-tRNA synthetase family. As to quaternary structure, homodimer. It depends on Mg(2+) as a cofactor.

The protein localises to the cytoplasm. The catalysed reaction is tRNA(Lys) + L-lysine + ATP = L-lysyl-tRNA(Lys) + AMP + diphosphate. This is Lysine--tRNA ligase from Buchnera aphidicola subsp. Baizongia pistaciae (strain Bp).